A 316-amino-acid polypeptide reads, in one-letter code: Ribosomal RNA small subunit methyltransferase H (316 aa).

S-adenosyl-L-methionine contacts are provided by residues 37 to 39 (GGH), aspartate 56, phenylalanine 83, aspartate 106, and histidine 113. The segment at 276-316 (PILPSEEETKENPASRSAKLRVLRKTKSADKKYKKENSKEE) is disordered. Residues 302 to 316 (KSADKKYKKENSKEE) show a composition bias toward basic and acidic residues.

The protein belongs to the methyltransferase superfamily. RsmH family.

It localises to the cytoplasm. It catalyses the reaction cytidine(1402) in 16S rRNA + S-adenosyl-L-methionine = N(4)-methylcytidine(1402) in 16S rRNA + S-adenosyl-L-homocysteine + H(+). Its function is as follows. Specifically methylates the N4 position of cytidine in position 1402 (C1402) of 16S rRNA. This Leptospira borgpetersenii serovar Hardjo-bovis (strain JB197) protein is Ribosomal RNA small subunit methyltransferase H.